The sequence spans 98 residues: Putative protein adenylyltransferase MJ1217 (98 aa).

The GSX(10)DXD motif motif lies at 31 to 45; the sequence is GSYAREEQKETSDID. Residues D43, D45, and D75 each coordinate Mg(2+).

Belongs to the MntA antitoxin family. As to quaternary structure, probably forms a complex with cognate toxin MJ1216. Requires Mg(2+) as cofactor.

The catalysed reaction is L-tyrosyl-[protein] + ATP = O-(5'-adenylyl)-L-tyrosyl-[protein] + diphosphate. The enzyme catalyses O-(5'-adenylyl)-L-tyrosyl-[protein] + ATP = O-[5'-(adenylyl-(5'-&gt;3')-adenylyl)]-L-tyrosyl-[protein] + diphosphate. Its function is as follows. Probable antitoxin component of a putative type VII toxin-antitoxin (TA) system. Neutralizes cognate toxic MJ1216 by di-AMPylation. The polypeptide is Putative protein adenylyltransferase MJ1217 (Methanocaldococcus jannaschii (strain ATCC 43067 / DSM 2661 / JAL-1 / JCM 10045 / NBRC 100440) (Methanococcus jannaschii)).